Reading from the N-terminus, the 123-residue chain is Defensin beta 118 (123 aa).

An N-terminal signal peptide occupies residues 1 to 19 (MKLLLLALPMLVLLPQVIP). 3 disulfide bridges follow: cysteine 27–cysteine 54, cysteine 34–cysteine 48, and cysteine 38–cysteine 55. Residues 65 to 123 (VPTTSPTPLSDSTRGVIDDILTVRFTTDYFEVSSKKNMVEESEVGQGTQTSLPNVHHSS) constitute a propeptide that is removed on maturation. The interval 100–123 (KNMVEESEVGQGTQTSLPNVHHSS) is disordered. A compositionally biased stretch (polar residues) spans 109–123 (GQGTQTSLPNVHHSS).

Belongs to the beta-defensin family. In terms of processing, the three-dimensional structure formed by the three intramolecular disulfide bridges is indispensable for antimicrobial activity.

It is found in the secreted. Host defense peptide that exhibits antimicrobial activity against both Gram-negative bacteria, such as E.coli and S.typhimurium, and Gram-positive bacteria, such as S.aureus and B.subtilis. Inhibits cell adhesion of E.coli on intestinal epithelial enterocytes. Causes rapid permeabilization of both the outer and inner membrane of E.coli, leading to morphological alterations on the bacterial surface. Binds to bacterial lipopolysaccharides (LPS) with high affinity, and may thereby be involved in immunoregulation through LPS neutralization. May contribute to epididymal innate immunity and protect the sperm against attack by microorganisms. The chain is Defensin beta 118 (DEFB118) from Pongo pygmaeus (Bornean orangutan).